A 222-amino-acid polypeptide reads, in one-letter code: Iron-sulfur cluster repair protein YtfE (222 aa).

Belongs to the RIC family. YtfE subfamily. Homodimer.

The protein localises to the cytoplasm. In terms of biological role, di-iron-containing protein involved in the repair of iron-sulfur clusters damaged by oxidative and nitrosative stress conditions. This is Iron-sulfur cluster repair protein YtfE from Musicola paradisiaca (strain Ech703) (Dickeya paradisiaca).